The sequence spans 430 residues: Putative FBD-associated F-box protein At5g56440 (430 aa).

Residues 1–49 (MDRISLLPDDVVFKILSFVPTKVVVSTNLLSKRWRYLWKHVPKLDYRDP) enclose the F-box domain. The region spanning 349–399 (QWEQPSSVPKCLISSLETVEWIDYKGREVEKKVVMYLLENSRQLKTMAIRS) is the FBD domain.

The sequence is that of Putative FBD-associated F-box protein At5g56440 from Arabidopsis thaliana (Mouse-ear cress).